The following is a 297-amino-acid chain: 4-hydroxy-tetrahydrodipicolinate synthase (297 aa).

Threonine 46 lines the pyruvate pocket. Tyrosine 136 serves as the catalytic Proton donor/acceptor. Residue lysine 165 is the Schiff-base intermediate with substrate of the active site. Threonine 206 contributes to the pyruvate binding site.

It belongs to the DapA family. In terms of assembly, homotetramer; dimer of dimers.

It localises to the cytoplasm. The catalysed reaction is L-aspartate 4-semialdehyde + pyruvate = (2S,4S)-4-hydroxy-2,3,4,5-tetrahydrodipicolinate + H2O + H(+). Its pathway is amino-acid biosynthesis; L-lysine biosynthesis via DAP pathway; (S)-tetrahydrodipicolinate from L-aspartate: step 3/4. Functionally, catalyzes the condensation of (S)-aspartate-beta-semialdehyde [(S)-ASA] and pyruvate to 4-hydroxy-tetrahydrodipicolinate (HTPA). This Sulfurimonas denitrificans (strain ATCC 33889 / DSM 1251) (Thiomicrospira denitrificans (strain ATCC 33889 / DSM 1251)) protein is 4-hydroxy-tetrahydrodipicolinate synthase.